A 262-amino-acid chain; its full sequence is Global transcriptional regulator CodY (262 aa).

The GAF domain stretch occupies residues 1 to 159 (MATLLEKTRK…ATTVIGVQLS (159 aa)). Residues 207-226 (ASVIADKIGITRSVIVNALR) constitute a DNA-binding region (H-T-H motif).

Belongs to the CodY family.

It is found in the cytoplasm. Functionally, DNA-binding global transcriptional regulator which is involved in the adaptive response to starvation and acts by directly or indirectly controlling the expression of numerous genes in response to nutrient availability. During rapid exponential growth, CodY is highly active and represses genes whose products allow adaptation to nutrient depletion. The polypeptide is Global transcriptional regulator CodY (Lactococcus lactis subsp. cremoris (strain SK11)).